Consider the following 1698-residue polypeptide: Bromodomain adjacent to zinc finger domain protein 2A (1698 aa).

2 disordered regions span residues 240–262 (QSTPNPLLPPDVSNLDDPSQLPS) and 352–387 (VMQESASEMGEDPEGSKAEEPVSGPENVSQDEMTIE). A compositionally biased stretch (polar residues) spans 377–387 (ENVSQDEMTIE). Positions 418-489 (IATPEQVCFP…EHFSFSPRMP (72 aa)) constitute an MBD domain. Disordered stretches follow at residues 524–550 (RGRPRNLEKAKAKEQKAKRGRGRPPKV) and 610–653 (EKEE…DRKL). Over residues 528 to 540 (RNLEKAKAKEQKA) the composition is skewed to basic and acidic residues. A DNA-binding region (a.T hook 1) is located at residues 541–553 (KRGRGRPPKVKMI). The stretch at 579 to 638 (VQLCKLKKKMRRKARNQEAKLEAAKKLKEIKEKEEKKQKIQKAKNQEKAKNQEKKRTRRQ) forms a coiled coil. Positions 610–632 (EKEEKKQKIQKAKNQEKAKNQEK) are enriched in basic and acidic residues. The region spanning 701–766 (SCAFSDCLTT…LQAAMINPGL (66 aa)) is the DDT domain. 4 disordered regions span residues 884 to 905 (ITTTEVSLRRRSERNAEENDEL), 1013 to 1063 (SFGS…PLTN), 1088 to 1110 (TVLTPESSPPHSESTPIISSEAT), and 1123 to 1149 (TPCRNHNQGLSTHSSNRLSPPSPTAAT). A compositionally biased stretch (basic and acidic residues) spans 890-900 (SLRRRSERNAE). 2 stretches are compositionally biased toward polar residues: residues 1023-1040 (HPRNSTAEPEQNSTSCHC) and 1051-1063 (VTDQFPNSVPLTN). Residues 1091-1108 (TPESSPPHSESTPIISSE) show a composition bias toward low complexity. Polar residues predominate over residues 1124-1149 (PCRNHNQGLSTHSSNRLSPPSPTAAT). The a.T hook 3 DNA-binding region spans 1204–1216 (EKRRGRRPSKLLK). A PHD-type zinc finger spans residues 1476 to 1526 (KVTCLYCRKGDNDELLLLCDSCDRGCHTYCHRPRMNEIPEGDWFCPTCISL). Residues 1549 to 1587 (FTEDSPSKPSRRREHPTASQFSPGESPASKKRRMGTRSQ) form a disordered region. A Bromo domain is found at 1585–1689 (RSQSPDLTFC…KFYDARWEEF (105 aa)).

Belongs to the WAL family. Component of the NoRC complex, at least composed of SMARCA5/SNF2H and BAZ2A/TIP5.

The protein resides in the nucleus. It is found in the nucleolus. Functionally, essential component of the NoRC (nucleolar remodeling complex) complex, a complex that mediates silencing of a fraction of rDNA by recruiting histone-modifying enzymes and DNA methyltransferases, leading to heterochromatin formation and transcriptional silencing. In the complex, it plays a central role by being recruited to rDNA and by targeting chromatin modifying enzymes such as HDAC1, leading to repress RNA polymerase I transcription. Recruited to rDNA via its interaction with TTF1 and its ability to recognize and bind histone H4 acetylated on 'Lys-16' (H4K16ac), leading to deacetylation of H4K5ac, H4K8ac, H4K12ac but not H4K16ac. Specifically binds pRNAs, 150-250 nucleotide RNAs that are complementary in sequence to the rDNA promoter; pRNA-binding is required for heterochromatin formation and rDNA silencing. This is Bromodomain adjacent to zinc finger domain protein 2A (baz2a) from Xenopus laevis (African clawed frog).